A 360-amino-acid chain; its full sequence is Peptide chain release factor 1 (360 aa).

Residue Gln-235 is modified to N5-methylglutamine. The interval 284-313 (AKRQQAEASTRRNLLGSGDRSDRNRTYNFP) is disordered.

It belongs to the prokaryotic/mitochondrial release factor family. Post-translationally, methylated by PrmC. Methylation increases the termination efficiency of RF1.

The protein resides in the cytoplasm. Its function is as follows. Peptide chain release factor 1 directs the termination of translation in response to the peptide chain termination codons UAG and UAA. This is Peptide chain release factor 1 from Salmonella gallinarum (strain 287/91 / NCTC 13346).